A 140-amino-acid polypeptide reads, in one-letter code: uncharacterized protein (140 aa).

This is an uncharacterized protein from Xylella fastidiosa (strain Temecula1 / ATCC 700964).